The chain runs to 1058 residues: Kinesin-like protein KIN-7M, chloroplastic (1058 aa).

The N-terminal 60 residues, 1-60 (MASSSSRTRSRSPFSHRRPPSPYSSASSTSSSLINNRLLPRSSSTPTSTVYNSGGVTGSR), are a transit peptide targeting the chloroplast. The disordered stretch occupies residues 1-92 (MASSSSRTRS…QSYPSEGLIG (92 aa)). Over residues 8–19 (TRSRSPFSHRRP) the composition is skewed to basic residues. Residues 23–49 (YSSASSTSSSLINNRLLPRSSSTPTST) show a composition bias toward low complexity. Residues 50-70 (VYNSGGVTGSRSMSITRTISD) show a composition bias toward polar residues. The Kinesin motor domain occupies 104 to 421 (SISVTVRFRP…LKFASRAKRI (318 aa)). Residue 184 to 191 (GVTSSGKT) coordinates ATP. Positions 422–509 (EINASRNKII…QKLTKLILVS (88 aa)) form a coiled coil. Residues 549–578 (PSSTLSLASDARRSSSKFKDENSPVGSRAE) are disordered. Residues 558 to 570 (DARRSSSKFKDEN) are compositionally biased toward basic and acidic residues. 4 coiled-coil regions span residues 621–658 (PENSKTQIQNLENDIQEKQRQMKSLEQRITESGEASIA), 704–826 (NNEL…AQKR), 873–904 (LEAALAEKEYIEEEFRKKAEEAKRREEALEND), and 935–999 (KEDE…SQAA). Residues 824 to 838 (QKRNNNSMNSAANRN) show a composition bias toward low complexity. Positions 824–847 (QKRNNNSMNSAANRNGTRPGRKAR) are disordered. A disordered region spans residues 922–946 (ALSIQKSDEAEPAKEDEVTELDNKN). Over residues 927–946 (KSDEAEPAKEDEVTELDNKN) the composition is skewed to basic and acidic residues. The RING-type zinc finger occupies 1011–1046 (CKVCFESPTATILLPCRHFCLCKSCSLACSECPICR).

This sequence belongs to the TRAFAC class myosin-kinesin ATPase superfamily. Kinesin family. KIN-7 subfamily.

Its subcellular location is the plastid. It is found in the chloroplast. The polypeptide is Kinesin-like protein KIN-7M, chloroplastic (Arabidopsis thaliana (Mouse-ear cress)).